Here is a 224-residue protein sequence, read N- to C-terminus: Flagellar L-ring protein (224 aa).

The signal sequence occupies residues 1–15 (MRSLLFSLTALVLAG). A lipid anchor (N-palmitoyl cysteine) is attached at Cys-16. The S-diacylglycerol cysteine moiety is linked to residue Cys-16.

This sequence belongs to the FlgH family. The basal body constitutes a major portion of the flagellar organelle and consists of four rings (L,P,S, and M) mounted on a central rod.

It localises to the cell outer membrane. The protein resides in the bacterial flagellum basal body. Its function is as follows. Assembles around the rod to form the L-ring and probably protects the motor/basal body from shearing forces during rotation. The protein is Flagellar L-ring protein of Idiomarina loihiensis (strain ATCC BAA-735 / DSM 15497 / L2-TR).